The sequence spans 276 residues: Undecaprenyl-diphosphatase (276 aa).

Transmembrane regions (helical) follow at residues A48–F68, L92–E112, L119–A139, I155–F175, A196–V216, F229–L249, and I255–V275.

The protein belongs to the UppP family.

Its subcellular location is the cell membrane. It catalyses the reaction di-trans,octa-cis-undecaprenyl diphosphate + H2O = di-trans,octa-cis-undecaprenyl phosphate + phosphate + H(+). Catalyzes the dephosphorylation of undecaprenyl diphosphate (UPP). Confers resistance to bacitracin. This Bacillus velezensis (strain DSM 23117 / BGSC 10A6 / LMG 26770 / FZB42) (Bacillus amyloliquefaciens subsp. plantarum) protein is Undecaprenyl-diphosphatase.